Here is a 563-residue protein sequence, read N- to C-terminus: MNTKELIAAEIAKVVPELEQENIQNLLEIPKNADMGDLAFPAFSLAKVLRKAPQMIAADIAEKIDASNFEKVEAVGPYINIFLDKSKISADVLGQVIAQGSHYADQNIGNGRNIAFDMSSPNIAKPFSIGHLRSTVIADALANIVAKQGYKPVRINHLGDWGKQFGMLIVAYKKWGSEEAVKANPINELLQLYVRINAEAEEDPSVDEEAREWFRKLEAGDEEATALWQWFRDESLVEFNRLYDELGVSFDSYNGEAFYNDKMDEVVDILTEKGLLQESQGAQVVNLEKYGIEHPALIKKSDGATLYITRDLAAALYRKRTYDFAKAIYVVGNEQSAHFKQLKAVLKEMGYNWSDDMTHVAFGLVTKNGKKLSTRKGNVILLEPTIAEAVNRAQAQIEAKNPNLPNKEAIAHAVGVGAIKFYDLKTDRMNGYDFDLDAMVSFEGETGPYVQYAHARIQSILRKADFTPSADATYSLNDVESWEIIKLLQDFPRIINRASDNFEPSIVAKFAISLAQAFNKYYAHTRILDESPERDSRLALCYATATVLKEALRLLGVEAPDEM.

The 'HIGH' region motif lies at 121 to 131 (PNIAKPFSIGH).

This sequence belongs to the class-I aminoacyl-tRNA synthetase family. In terms of assembly, monomer.

Its subcellular location is the cytoplasm. The enzyme catalyses tRNA(Arg) + L-arginine + ATP = L-arginyl-tRNA(Arg) + AMP + diphosphate. In Streptococcus thermophilus (strain CNRZ 1066), this protein is Arginine--tRNA ligase.